The primary structure comprises 506 residues: 2,3-bisphosphoglycerate-independent phosphoglycerate mutase (506 aa).

Residues Asp-13 and Ser-63 each coordinate Mn(2+). The Phosphoserine intermediate role is filled by Ser-63. Residues His-124, 153–154, Arg-183, Arg-189, 255–258, and Lys-331 contribute to the substrate site; these read RD and RADR. Mn(2+) is bound by residues Asp-397, His-401, Asp-438, His-439, and His-457.

Belongs to the BPG-independent phosphoglycerate mutase family. Monomer. It depends on Mn(2+) as a cofactor.

It catalyses the reaction (2R)-2-phosphoglycerate = (2R)-3-phosphoglycerate. Its pathway is carbohydrate degradation; glycolysis; pyruvate from D-glyceraldehyde 3-phosphate: step 3/5. Functionally, catalyzes the interconversion of 2-phosphoglycerate and 3-phosphoglycerate. This is 2,3-bisphosphoglycerate-independent phosphoglycerate mutase from Ruegeria sp. (strain TM1040) (Silicibacter sp.).